We begin with the raw amino-acid sequence, 237 residues long: 2,3-bisphosphoglycerate-dependent phosphoglycerate mutase (237 aa).

Residues 8-15 (RHGQSQWN), 21-22 (TG), arginine 60, 87-90 (ERHY), lysine 98, 114-115 (RR), and 180-181 (GN) contribute to the substrate site. Histidine 9 serves as the catalytic Tele-phosphohistidine intermediate. The active-site Proton donor/acceptor is glutamate 87.

Belongs to the phosphoglycerate mutase family. BPG-dependent PGAM subfamily. In terms of assembly, homodimer.

The enzyme catalyses (2R)-2-phosphoglycerate = (2R)-3-phosphoglycerate. The protein operates within carbohydrate degradation; glycolysis; pyruvate from D-glyceraldehyde 3-phosphate: step 3/5. Functionally, catalyzes the interconversion of 2-phosphoglycerate and 3-phosphoglycerate. The sequence is that of 2,3-bisphosphoglycerate-dependent phosphoglycerate mutase from Caulobacter sp. (strain K31).